Consider the following 291-residue polypeptide: ATP synthase subunit a (291 aa).

A run of 6 helical transmembrane segments spans residues 51–71, 117–137, 146–166, 173–193, 213–233, and 239–259; these read FSFT…LLLV, FFPC…QGMI, HFLI…IVGF, FLSF…LVLL, MMAG…MLCM, and FIGD…ELGV.

This sequence belongs to the ATPase A chain family. In terms of assembly, F-type ATPases have 2 components, CF(1) - the catalytic core - and CF(0) - the membrane proton channel. CF(1) has five subunits: alpha(3), beta(3), gamma(1), delta(1), epsilon(1). CF(0) has three main subunits: a, b and c.

The protein resides in the mitochondrion inner membrane. In terms of biological role, mitochondrial membrane ATP synthase (F(1)F(0) ATP synthase or Complex V) produces ATP from ADP in the presence of a proton gradient across the membrane which is generated by electron transport complexes of the respiratory chain. F-type ATPases consist of two structural domains, F(1) - containing the extramembraneous catalytic core and F(0) - containing the membrane proton channel, linked together by a central stalk and a peripheral stalk. During catalysis, ATP synthesis in the catalytic domain of F(1) is coupled via a rotary mechanism of the central stalk subunits to proton translocation. Key component of the proton channel; it may play a direct role in the translocation of protons across the membrane. This Vicia faba (Broad bean) protein is ATP synthase subunit a (ATP6).